A 475-amino-acid chain; its full sequence is Protein FAM161A (475 aa).

Positions 53–107 (ISDSSSSSASEKSCSHPALSVTSLSEPDLDGSSSLSTTTDEGLPDLEEKTPGESS) are disordered. Composition is skewed to low complexity over residues 54–64 (SDSSSSSASEK) and 82–93 (DGSSSLSTTTDE). Residues 162-234 (VREQNRREKA…RERNRAALLA (73 aa)) are a coiled coil. The required for interaction with CFAP418 stretch occupies residues 255-434 (KLRDLFRAKR…PTASSRGREQ (180 aa)). Residues 314-337 (RSACRRFRDPRSPAKPRGKHRRRC) form a disordered region. Basic residues predominate over residues 327–337 (AKPRGKHRRRC). Lys377 is covalently cross-linked (Glycyl lysine isopeptide (Lys-Gly) (interchain with G-Cter in SUMO2)). A disordered region spans residues 389–441 (EEILRETRRPGRSPRRKSPGRSSNPKPRPHECSPPMPTASSRGREQAIRRSEK). Over residues 398–407 (PGRSPRRKSP) the composition is skewed to basic residues. The span at 430–441 (RGREQAIRRSEK) shows a compositional bias: basic and acidic residues.

Belongs to the FAM161 family. Interacts (via central region) with CFAP418 (via N-terminus); the interaction is direct. Interacts (via C-terminus) with microtubules. Interacts with LCA5. Interacts with CEP290. Interacts with SDCCAG8. Interacts with FAM161B. Interacts with POC1B. Interacts with CEP78. Forms a microtubule-associated complex with POC5, CETN2 and POC1B. Interacts with CCDC15. Expressed in the retina.

The protein resides in the cytoplasm. It localises to the cytoskeleton. The protein localises to the cilium basal body. It is found in the cell projection. Its subcellular location is the cilium. The protein resides in the microtubule organizing center. It localises to the centrosome. The protein localises to the centriole. In terms of biological role, involved in ciliogenesis. This chain is Protein FAM161A, found in Mus musculus (Mouse).